Reading from the N-terminus, the 463-residue chain is Membrane-bound lytic murein transglycosylase F (463 aa).

Positions 1 to 33 are cleaved as a signal peptide; the sequence is MQSQDYKKRLKLQIIIILSIAVMSCGVPNVPTA. Residues 34–272 are non-LT domain; that stretch reads LSSLLERESI…VLEDKYFGHI (239 aa). The interval 273–463 is LT domain; that stretch reads RQFDYVDSRA…LVWLDEQGKI (191 aa). The active site involves E317.

This sequence in the N-terminal section; belongs to the bacterial solute-binding protein 3 family. The protein in the C-terminal section; belongs to the transglycosylase Slt family.

The protein resides in the cell outer membrane. It carries out the reaction Exolytic cleavage of the (1-&gt;4)-beta-glycosidic linkage between N-acetylmuramic acid (MurNAc) and N-acetylglucosamine (GlcNAc) residues in peptidoglycan, from either the reducing or the non-reducing ends of the peptidoglycan chains, with concomitant formation of a 1,6-anhydrobond in the MurNAc residue.. Its function is as follows. Murein-degrading enzyme that degrades murein glycan strands and insoluble, high-molecular weight murein sacculi, with the concomitant formation of a 1,6-anhydromuramoyl product. Lytic transglycosylases (LTs) play an integral role in the metabolism of the peptidoglycan (PG) sacculus. Their lytic action creates space within the PG sacculus to allow for its expansion as well as for the insertion of various structures such as secretion systems and flagella. The protein is Membrane-bound lytic murein transglycosylase F of Alteromonas mediterranea (strain DSM 17117 / CIP 110805 / LMG 28347 / Deep ecotype).